Reading from the N-terminus, the 293-residue chain is 5'-3' exoribonuclease Rnm (293 aa).

Residues histidine 17, histidine 19, aspartate 24, histidine 49, glutamate 76, histidine 87, histidine 202, aspartate 259, and histidine 261 each contribute to the Mn(2+) site.

This sequence belongs to the PHP family. TrpH/YciV subfamily. The cofactor is Mn(2+).

The catalysed reaction is a ribonucleoside 3',5'-bisphosphate + H2O = a ribonucleoside 5'-phosphate + phosphate. Exoribonuclease that catalyzes the last steps of 5S, 16S and 23S rRNA 5'-end maturation. Removes 3 nucleotides (nt) from the 5' end of 5S, 16S and 23S rRNA precursors to generate the mature 5' ends. 5S and 23S rRNA maturation occurs more efficiently and accurately on ribosomal particles as compared to free RNA. Efficiently catalyzes the hydrolysis of the 3'-phosphate from 3',5'-bis-phosphonucleotides as well as the successive hydrolysis of 5'-phosphomononucleotides from the 5'-end of short pieces of RNA and DNA, with no specificity toward the identity of the nucleotide base. Is more efficient at hydrolyzing RNA oligonucleotides than DNA oligonucleotides. This enzyme can also hydrolyze annealed DNA duplexes, albeit at a catalytic efficiency lower than that of the corresponding single-stranded oligonucleotides. In Salmonella typhimurium (strain LT2 / SGSC1412 / ATCC 700720), this protein is 5'-3' exoribonuclease Rnm.